The following is a 113-amino-acid chain: MKRRSVCVGDTVYVLAGNDKGKQGKVLSCLREKNKVVVEGINVRTKNIKRSQENPKGKRISIEAPIHVSNVRLSIEGAPAKISVKVTEKGRELWNKFPDGTSKLYRFVKERKG.

The protein belongs to the universal ribosomal protein uL24 family. Part of the 50S ribosomal subunit.

In terms of biological role, one of two assembly initiator proteins, it binds directly to the 5'-end of the 23S rRNA, where it nucleates assembly of the 50S subunit. Functionally, one of the proteins that surrounds the polypeptide exit tunnel on the outside of the subunit. The chain is Large ribosomal subunit protein uL24 from Chlamydia felis (strain Fe/C-56) (Chlamydophila felis).